The chain runs to 94 residues: MTTGSNDFYYSNKYEDDEYEYRHVHVTKDVAKLIPKNRLMSETEWRSLGIQQSPGWIHYMIHGPERHVLLFRRPLPNAQKTVRGGGGTSAVGVR.

It belongs to the CKS family. Forms a homohexamer that can probably bind six kinase subunits. Interacts with cdk-1.

The protein localises to the nucleus. Its function is as follows. Binds to the catalytic subunit of the cyclin dependent kinases and is essential for their biological function. Has a role in the exit from M phase during early mitotic cell division. More specifically, thought to act by the degrading B-type cyclins that causes breakdown of nuclear envelope and exit mitosis. This is Cyclin-dependent kinases regulatory subunit from Caenorhabditis briggsae.